The chain runs to 690 residues: Elongation factor G (690 aa).

The region spanning 8–283 (EDYRNFGIMA…AVVDYLPSPL (276 aa)) is the tr-type G domain. GTP-binding positions include 17–24 (AHIDAGKT), 81–85 (DTPGH), and 135–138 (NKMD).

It belongs to the TRAFAC class translation factor GTPase superfamily. Classic translation factor GTPase family. EF-G/EF-2 subfamily.

It localises to the cytoplasm. Catalyzes the GTP-dependent ribosomal translocation step during translation elongation. During this step, the ribosome changes from the pre-translocational (PRE) to the post-translocational (POST) state as the newly formed A-site-bound peptidyl-tRNA and P-site-bound deacylated tRNA move to the P and E sites, respectively. Catalyzes the coordinated movement of the two tRNA molecules, the mRNA and conformational changes in the ribosome. This chain is Elongation factor G, found in Bradyrhizobium sp. (strain BTAi1 / ATCC BAA-1182).